The primary structure comprises 154 residues: Ascorbate-specific PTS system EIIA component (154 aa).

The PTS EIIA type-2 domain maps to 6–150 (SLAVNKSIRL…QEVLDLIDRT (145 aa)). H68 acts as the Tele-phosphohistidine intermediate in catalysis. Residue H68 is modified to Phosphohistidine.

The protein localises to the cytoplasm. Functionally, the phosphoenolpyruvate-dependent sugar phosphotransferase system (sugar PTS), a major carbohydrate active transport system, catalyzes the phosphorylation of incoming sugar substrates concomitantly with their translocation across the cell membrane. The enzyme II UlaABC PTS system is involved in ascorbate transport. The chain is Ascorbate-specific PTS system EIIA component (ulaC) from Shigella dysenteriae serotype 1 (strain Sd197).